The sequence spans 188 residues: Probable nicotinate-nucleotide adenylyltransferase (188 aa).

Belongs to the NadD family.

The catalysed reaction is nicotinate beta-D-ribonucleotide + ATP + H(+) = deamido-NAD(+) + diphosphate. The protein operates within cofactor biosynthesis; NAD(+) biosynthesis; deamido-NAD(+) from nicotinate D-ribonucleotide: step 1/1. Functionally, catalyzes the reversible adenylation of nicotinate mononucleotide (NaMN) to nicotinic acid adenine dinucleotide (NaAD). The protein is Probable nicotinate-nucleotide adenylyltransferase of Listeria monocytogenes serovar 1/2a (strain ATCC BAA-679 / EGD-e).